Reading from the N-terminus, the 339-residue chain is Large ribosomal subunit protein uL10 (339 aa).

The interval 307 to 339 is disordered; it reads VEEEKKEEKVEEEKEDEEASEEEALAGLSALFG. Positions 308–318 are enriched in basic and acidic residues; sequence EEEKKEEKVEE. A compositionally biased stretch (acidic residues) spans 319-330; it reads EKEDEEASEEEA.

Belongs to the universal ribosomal protein uL10 family. In terms of assembly, part of the 50S ribosomal subunit. Forms part of the ribosomal stalk which helps the ribosome interact with GTP-bound translation factors. Forms a heptameric L10(L12)2(L12)2(L12)2 complex, where L10 forms an elongated spine to which the L12 dimers bind in a sequential fashion.

Forms part of the ribosomal stalk, playing a central role in the interaction of the ribosome with GTP-bound translation factors. In Pyrococcus furiosus (strain ATCC 43587 / DSM 3638 / JCM 8422 / Vc1), this protein is Large ribosomal subunit protein uL10.